The following is a 334-amino-acid chain: Fructose-1,6-bisphosphatase class 1 (334 aa).

Mg(2+) contacts are provided by E92, D114, L116, and D117. Residues 117 to 120 and N209 each bind substrate; that span reads DGSS. A Mg(2+)-binding site is contributed by E281.

It belongs to the FBPase class 1 family. As to quaternary structure, homotetramer. It depends on Mg(2+) as a cofactor.

The protein localises to the cytoplasm. The catalysed reaction is beta-D-fructose 1,6-bisphosphate + H2O = beta-D-fructose 6-phosphate + phosphate. It functions in the pathway carbohydrate biosynthesis; gluconeogenesis. This is Fructose-1,6-bisphosphatase class 1 from Nitrosomonas europaea (strain ATCC 19718 / CIP 103999 / KCTC 2705 / NBRC 14298).